The primary structure comprises 426 residues: 2-(3-amino-3-carboxypropyl)histidine synthase subunit 1 (426 aa).

3 residues coordinate [4Fe-4S] cluster: Cys-133, Cys-239, and Cys-368.

It belongs to the DPH1/DPH2 family. DPH1 subfamily. In terms of assembly, component of the 2-(3-amino-3-carboxypropyl)histidine synthase complex composed of DPH1, DPH2, DPH3 and a NADH-dependent reductase, predominantly CBR1. Requires [4Fe-4S] cluster as cofactor.

The protein resides in the cytoplasm. The catalysed reaction is L-histidyl-[translation elongation factor 2] + S-adenosyl-L-methionine = 2-[(3S)-amino-3-carboxypropyl]-L-histidyl-[translation elongation factor 2] + S-methyl-5'-thioadenosine + H(+). The protein operates within protein modification; peptidyl-diphthamide biosynthesis. Functionally, catalyzes the first step of diphthamide biosynthesis, a post-translational modification of histidine which occurs in elongation factor 2. DPH1 and DPH2 transfer a 3-amino-3-carboxypropyl (ACP) group from S-adenosyl-L-methionine (SAM) to a histidine residue, the reaction is assisted by a reduction system comprising DPH3 and a NADH-dependent reductase, predominantly CBR1. This Eremothecium gossypii (strain ATCC 10895 / CBS 109.51 / FGSC 9923 / NRRL Y-1056) (Yeast) protein is 2-(3-amino-3-carboxypropyl)histidine synthase subunit 1 (DPH1).